The sequence spans 371 residues: Putative RING finger protein ORF117 (371 aa).

An RING-type zinc finger spans residues 72–108 (CCICFRKDVIYKEVPCGHYICVECYKEPIRNVCPECN). Positions 178–192 (EEEMNESEAEEEEPV) are enriched in acidic residues. The segment at 178 to 218 (EEEMNESEAEEEEPVPEIAQFEALNTPPPPPTNRRPKIRRP) is disordered.

This is Putative RING finger protein ORF117 from Magallana gigas (Pacific oyster).